Reading from the N-terminus, the 467-residue chain is uncharacterized protein (467 aa).

9 Sel1-like repeats span residues 38–73 (PAAAFELAKHLMDADSPYQDREQGMEMLRIAAEQGH), 107–138 (PEAQVRLMYLLYASRHFEEALEWAKTSAKNNN), 139–172 (PHGQYLLAQYCRYGTPPDFETAHLLYRKSAAQGL), 173–208 (PEAHWQLGLQYRFGQGTKVDTAQAVNHLRAAAQQGY), 240–275 (PDAHAALADIYLQGKHLERNHKLALHHAEAAAAERH), 276–311 (PEGLRILGDICRYGLGIAPDTEKARHYYRQAAEAGS), 343–378 (AERLYQKAQALHYGLQCAPEYAAALKLYTEAAELGH), 379–414 (SKAQTNLGSMYYFGQGMTADYNEARKWFEKAAAKKD), and 415–450 (SMAFYNLACIHYSGHGVEPDKEKACRYLQEAINNGY).

This is an uncharacterized protein from Neisseria meningitidis serogroup B (strain ATCC BAA-335 / MC58).